A 339-amino-acid polypeptide reads, in one-letter code: 4-hydroxy-2-oxovalerate aldolase (339 aa).

A Pyruvate carboxyltransferase domain is found at 7 to 259 (VILHDMSLRD…QSGIDLYKIM (253 aa)). 15 to 16 (RD) contacts substrate. D16 lines the Mn(2+) pocket. H19 acts as the Proton acceptor in catalysis. The substrate site is built by S169 and H198. H198 and H200 together coordinate Mn(2+). Position 289 (Y289) interacts with substrate.

It belongs to the 4-hydroxy-2-oxovalerate aldolase family.

It catalyses the reaction (S)-4-hydroxy-2-oxopentanoate = acetaldehyde + pyruvate. This Marinomonas sp. (strain MWYL1) protein is 4-hydroxy-2-oxovalerate aldolase.